The sequence spans 752 residues: Multifunctional tryptophan biosynthesis protein (752 aa).

The region spanning 3–202 is the Glutamine amidotransferase type-1 domain; the sequence is FTLLIDNYDS…IQMKGGKWGG (200 aa). L-glutamine is bound at residue 58–60; sequence GPG. Cys86 (nucleophile; for GATase activity) is an active-site residue. 136–137 contributes to the L-glutamine binding site; sequence SL. Catalysis depends on for GATase activity residues His176 and Glu178. The tract at residues 231–495 is indole-3-glycerol phosphate synthase; sequence ILNRIHAQRL…DTKAFLRSLI (265 aa). Residues 509 to 752 form an N-(5'-phosphoribosyl)anthranilate isomerase region; it reads LVKICGIRST…VEAFVKAVRG (244 aa).

It carries out the reaction N-(5-phospho-beta-D-ribosyl)anthranilate = 1-(2-carboxyphenylamino)-1-deoxy-D-ribulose 5-phosphate. It catalyses the reaction 1-(2-carboxyphenylamino)-1-deoxy-D-ribulose 5-phosphate + H(+) = (1S,2R)-1-C-(indol-3-yl)glycerol 3-phosphate + CO2 + H2O. The enzyme catalyses chorismate + L-glutamine = anthranilate + pyruvate + L-glutamate + H(+). It participates in amino-acid biosynthesis; L-tryptophan biosynthesis; L-tryptophan from chorismate: step 1/5. Its pathway is amino-acid biosynthesis; L-tryptophan biosynthesis; L-tryptophan from chorismate: step 3/5. The protein operates within amino-acid biosynthesis; L-tryptophan biosynthesis; L-tryptophan from chorismate: step 4/5. Its function is as follows. Trifunctional enzyme bearing the Gln amidotransferase (GATase) domain of anthranilate synthase, indole-glycerolphosphate synthase, and phosphoribosylanthranilate isomerase activities. This Cryptococcus neoformans var. neoformans serotype D (strain B-3501A) (Filobasidiella neoformans) protein is Multifunctional tryptophan biosynthesis protein (TRP1).